A 442-amino-acid polypeptide reads, in one-letter code: UDP-N-acetylmuramate--L-alanine ligase (442 aa).

109 to 115 (GAHGKTS) is a binding site for ATP.

Belongs to the MurCDEF family.

It localises to the cytoplasm. It catalyses the reaction UDP-N-acetyl-alpha-D-muramate + L-alanine + ATP = UDP-N-acetyl-alpha-D-muramoyl-L-alanine + ADP + phosphate + H(+). Its pathway is cell wall biogenesis; peptidoglycan biosynthesis. In terms of biological role, cell wall formation. The polypeptide is UDP-N-acetylmuramate--L-alanine ligase (Streptococcus pyogenes serotype M2 (strain MGAS10270)).